Here is a 355-residue protein sequence, read N- to C-terminus: 3-isopropylmalate dehydrogenase (355 aa).

4 residues coordinate substrate: Arg-90, Arg-100, Arg-128, and Asp-222. Positions 222, 246, and 250 each coordinate Mg(2+). Gly-280–Asn-292 is a binding site for NAD(+).

The protein belongs to the isocitrate and isopropylmalate dehydrogenases family. LeuB type 1 subfamily. Homodimer. The cofactor is Mg(2+). Requires Mn(2+) as cofactor.

It localises to the cytoplasm. The catalysed reaction is (2R,3S)-3-isopropylmalate + NAD(+) = 4-methyl-2-oxopentanoate + CO2 + NADH. It participates in amino-acid biosynthesis; L-leucine biosynthesis; L-leucine from 3-methyl-2-oxobutanoate: step 3/4. Functionally, catalyzes the oxidation of 3-carboxy-2-hydroxy-4-methylpentanoate (3-isopropylmalate) to 3-carboxy-4-methyl-2-oxopentanoate. The product decarboxylates to 4-methyl-2 oxopentanoate. In Burkholderia multivorans (strain ATCC 17616 / 249), this protein is 3-isopropylmalate dehydrogenase.